The sequence spans 105 residues: MATIQQQKIRIRLKAFDRRLLDTSCEKIVDTANRTGATALGPIPLPTKRRIYCVLRSPHVDKDSREHFETRTHRRIIDIYQPSSKTIDALMKLDLPAGVDIEVKL.

This sequence belongs to the universal ribosomal protein uS10 family. As to quaternary structure, part of the 30S ribosomal subunit.

Involved in the binding of tRNA to the ribosomes. This Arthrospira platensis (Spirulina platensis) protein is Small ribosomal subunit protein uS10.